The sequence spans 247 residues: Proteasome subunit alpha type-7-B (247 aa).

It belongs to the peptidase T1A family. The 26S proteasome consists of a 20S proteasome core and two 19S regulatory subunits. The 20S proteasome core is composed of 28 subunits that are arranged in four stacked rings, resulting in a barrel-shaped structure. The two end rings are each formed by seven alpha subunits, and the two central rings are each formed by seven beta subunits. The catalytic chamber with the active sites is on the inside of the barrel. Phosphorylated in G2 phase.

It is found in the cytoplasm. Its subcellular location is the nucleus. In terms of biological role, the proteasome is a multicatalytic proteinase complex which is characterized by its ability to cleave peptides with Arg, Phe, Tyr, Leu, and Glu adjacent to the leaving group at neutral or slightly basic pH. The proteasome has an ATP-dependent proteolytic activity. In Xenopus laevis (African clawed frog), this protein is Proteasome subunit alpha type-7-B (psma7-b).